Reading from the N-terminus, the 395-residue chain is Acid ceramidase (395 aa).

Positions 1-20 (MLGWSRLTFILLSGIVTCLV) are cleaved as a signal peptide. Cysteine 31 and cysteine 340 form a disulfide bridge. Catalysis depends on cysteine 143, which acts as the Nucleophile. N-linked (GlcNAc...) asparagine glycosylation is found at asparagine 195, asparagine 259, asparagine 286, and asparagine 342. Residues cysteine 388 and cysteine 392 are joined by a disulfide bond.

Belongs to the acid ceramidase family. Heterodimer; disulfide-linked. The heterodimer is composed of the disulfide-linked alpha and beta chains produced by autocatalytic cleavage of the precursor. N-glycosylated. In terms of processing, proteolytically cleaved into two chains alpha and beta that remain associated via a disulfide bond. Cleavage gives rise to a conformation change that activates the enzyme. The same catalytic Cys residue mediates the autoproteolytic cleavage and subsequent hydrolysis of lipid substrates. The beta chain may undergo an additional C-terminal processing.

It is found in the lysosome. Its subcellular location is the secreted. The catalysed reaction is an N-acylsphing-4-enine + H2O = sphing-4-enine + a fatty acid. The enzyme catalyses N-dodecanoylsphing-4-enine + H2O = dodecanoate + sphing-4-enine. It catalyses the reaction N-tetradecanoylsphing-4-enine + H2O = tetradecanoate + sphing-4-enine. It carries out the reaction N-hexadecanoylsphing-4-enine + H2O = sphing-4-enine + hexadecanoate. The catalysed reaction is N-octadecanoylsphing-4-enine + H2O = sphing-4-enine + octadecanoate. The enzyme catalyses N-dodecanoyl-(4R)-hydroxysphinganine + H2O = (4R)-hydroxysphinganine + dodecanoate. It catalyses the reaction N-(dodecanoyl)-sphinganine + H2O = dodecanoate + sphinganine. It carries out the reaction N-(acetyl)-sphing-4-enine + H2O = sphing-4-enine + acetate. The catalysed reaction is N-(hexanoyl)sphing-4-enine + H2O = hexanoate + sphing-4-enine. The enzyme catalyses N-octanoylsphing-4-enine + H2O = octanoate + sphing-4-enine. It catalyses the reaction N-(9Z-octadecenoyl)-sphing-4-enine + H2O = sphing-4-enine + (9Z)-octadecenoate. It carries out the reaction N-dodecanoylethanolamine + H2O = dodecanoate + ethanolamine. Its pathway is lipid metabolism; sphingolipid metabolism. In terms of biological role, lysosomal ceramidase that hydrolyzes sphingolipid ceramides into sphingosine and free fatty acids at acidic pH. Ceramides, sphingosine, and its phosphorylated form sphingosine-1-phosphate are bioactive lipids that mediate cellular signaling pathways regulating several biological processes including cell proliferation, apoptosis and differentiation. Has a higher catalytic efficiency towards C12-ceramides versus other ceramides. Also catalyzes the reverse reaction allowing the synthesis of ceramides from fatty acids and sphingosine. For the reverse synthetic reaction, the natural sphingosine D-erythro isomer is more efficiently utilized as a substrate compared to D-erythro-dihydrosphingosine and D-erythro-phytosphingosine, while the fatty acids with chain lengths of 12 or 14 carbons are the most efficiently used. Also has an N-acylethanolamine hydrolase activity. By regulating the levels of ceramides, sphingosine and sphingosine-1-phosphate in the epidermis, mediates the calcium-induced differentiation of epidermal keratinocytes. Also indirectly regulates tumor necrosis factor/TNF-induced apoptosis. By regulating the intracellular balance between ceramides and sphingosine, in adrenocortical cells, probably also acts as a regulator of steroidogenesis. This is Acid ceramidase from Bos taurus (Bovine).